We begin with the raw amino-acid sequence, 110 residues long: T cell receptor alpha variable 22 (110 aa).

The signal sequence occupies residues 1 to 21 (MKRILGALLGLLSAQVCCVRG). One can recognise an Ig-like domain in the interval 22 to 110 (IQVEQSPPDL…DSGVYFCAVE (89 aa)). 2 N-linked (GlcNAc...) asparagine glycosylation sites follow: Asn38 and Asn44. A disulfide bridge connects residues Cys43 and Cys107.

As to quaternary structure, alpha-beta TR is a heterodimer composed of an alpha and beta chain; disulfide-linked. The alpha-beta TR is associated with the transmembrane signaling CD3 coreceptor proteins to form the TR-CD3 (TcR or TCR). The assembly of alpha-beta TR heterodimers with CD3 occurs in the endoplasmic reticulum where a single alpha-beta TR heterodimer associates with one CD3D-CD3E heterodimer, one CD3G-CD3E heterodimer and one CD247 homodimer forming a stable octameric structure. CD3D-CD3E and CD3G-CD3E heterodimers preferentially associate with TR alpha and TR beta chains, respectively. The association of the CD247 homodimer is the last step of TcR assembly in the endoplasmic reticulum and is required for transport to the cell surface.

The protein localises to the cell membrane. Functionally, v region of the variable domain of T cell receptor (TR) alpha chain that participates in the antigen recognition. Alpha-beta T cell receptors are antigen specific receptors which are essential to the immune response and are present on the cell surface of T lymphocytes. Recognize peptide-major histocompatibility (MH) (pMH) complexes that are displayed by antigen presenting cells (APC), a prerequisite for efficient T cell adaptive immunity against pathogens. Binding of alpha-beta TR to pMH complex initiates TR-CD3 clustering on the cell surface and intracellular activation of LCK that phosphorylates the ITAM motifs of CD3G, CD3D, CD3E and CD247 enabling the recruitment of ZAP70. In turn ZAP70 phosphorylates LAT, which recruits numerous signaling molecules to form the LAT signalosome. The LAT signalosome propagates signal branching to three major signaling pathways, the calcium, the mitogen-activated protein kinase (MAPK) kinase and the nuclear factor NF-kappa-B (NF-kB) pathways, leading to the mobilization of transcription factors that are critical for gene expression and essential for T cell growth and differentiation. The T cell repertoire is generated in the thymus, by V-(D)-J rearrangement. This repertoire is then shaped by intrathymic selection events to generate a peripheral T cell pool of self-MH restricted, non-autoaggressive T cells. Post-thymic interaction of alpha-beta TR with the pMH complexes shapes TR structural and functional avidity. This is T cell receptor alpha variable 22 from Homo sapiens (Human).